The following is a 361-amino-acid chain: Velvet complex subunit B (361 aa).

2 disordered regions span residues 1–36 (MYAV…SLRQ) and 308–340 (NGAP…VLLR). Residues 23-35 (PSVQYPSGTTSLR) are compositionally biased toward polar residues. Positions 47 to 353 (QDGRSWSLQV…SASALRYRVS (307 aa)) constitute a Velvet domain. Positions 323-336 (SLNPSRSSPPKSSP) are enriched in low complexity.

This sequence belongs to the velvet family. VelB subfamily. As to quaternary structure, component of the heterotrimeric velvet complex composed of laeA, veA and velB; VeA acting as a bridging protein between laeA and velB. Interacts with velA. Forms a heterodimeric complex with vosA; the formation of the velB-vosA complex is light-dependent. Interacts with vosA.

It is found in the nucleus. Its subcellular location is the cytoplasm. Its function is as follows. Component of the velvet transcription factor complex that controls sexual/asexual developmental ratio in response to light, promoting sexual development in the darkness while stimulating asexual sporulation under illumination. The velvet complex acts as a global regulator for secondary metabolite gene expression. Component of the velB-VosA heterodimeric complex that plays a dual role in activating genes associated with spore maturation and repressing certain development-associated genes. The velB-VosA complex binds DNA through the DNA-binding domain of vosA that recognizes an 11-nucleotide consensus sequence 5'-CTGGCCGCGGC-3' consisting of two motifs in the promoters of key developmental regulatory genes. Controls conidiophore formation. In Penicillium rubens (strain ATCC 28089 / DSM 1075 / NRRL 1951 / Wisconsin 54-1255) (Penicillium chrysogenum), this protein is Velvet complex subunit B.